Consider the following 69-residue polypeptide: Rubredoxin-1 (69 aa).

Residues 14-69 (QASWMCAECGYIYDPAEGNLETNIRPGMPFDKLPDDWSCPVCNHPKNQFTKFISQL) form the Rubredoxin-like domain. Fe cation is bound by residues C19, C22, C52, and C55.

Belongs to the rubredoxin family. In terms of assembly, monomer. The cofactor is Fe(3+).

Serves as an electron acceptor for pyruvate ferredoxin oxidoreductase (PFOR). The protein is Rubredoxin-1 (rub1) of Chlorobaculum tepidum (strain ATCC 49652 / DSM 12025 / NBRC 103806 / TLS) (Chlorobium tepidum).